Here is a 540-residue protein sequence, read N- to C-terminus: Phosphoenolpyruvate carboxykinase (ATP) (540 aa).

A substrate-binding site is contributed by Arg-65. The residue at position 87 (Lys-87) is an N6-acetyllysine. Residues Tyr-207 and Lys-213 each contribute to the substrate site. ATP contacts are provided by residues Lys-213, His-232, and 248 to 256 (GLSGTGKTT). Residues Lys-213 and His-232 each coordinate Mn(2+). Asp-269 lines the Mn(2+) pocket. ATP-binding positions include Glu-297, Arg-333, 449-450 (RI), and Thr-455. Arg-333 serves as a coordination point for substrate. Lys-523 carries the post-translational modification N6-acetyllysine.

The protein belongs to the phosphoenolpyruvate carboxykinase (ATP) family. Monomer. Mn(2+) serves as cofactor.

It is found in the cytoplasm. The catalysed reaction is oxaloacetate + ATP = phosphoenolpyruvate + ADP + CO2. Its pathway is carbohydrate biosynthesis; gluconeogenesis. Involved in the gluconeogenesis. Catalyzes the conversion of oxaloacetate (OAA) to phosphoenolpyruvate (PEP) through direct phosphoryl transfer between the nucleoside triphosphate and OAA. The chain is Phosphoenolpyruvate carboxykinase (ATP) from Escherichia coli O6:H1 (strain CFT073 / ATCC 700928 / UPEC).